A 992-amino-acid polypeptide reads, in one-letter code: GATOR2 complex protein WDR59 (992 aa).

WD repeat units follow at residues 57–98 (QSKW…GEVG), 103–143 (GHTR…KPTV), 146–185 (SAVA…TAVE), 189–229 (AHLS…KYLN), 232–276 (PCQV…APVH), 278–318 (FVGH…RVDY), and 319–362 (QMQR…SLSH). Residues 343–373 (PEPEKTPHPQDIDHQPSLSHGEEDAIKEDPP) form a disordered region. A compositionally biased stretch (basic and acidic residues) spans 344–373 (EPEKTPHPQDIDHQPSLSHGEEDAIKEDPP). The RWD domain occupies 393–494 (QEFSLINVQI…RQLVSCLESF (102 aa)). Phosphoserine is present on S564. The WD 8 repeat unit spans residues 660-706 (KSLGELYILNVNDTQETCQKNATSAMLVGRKDLVQVWSLATVATDLC). 3 positions are modified to phosphoserine: S839, S840, and S848. The tract at residues 849–870 (LTYSDPRERERDQHDKNKRLLD) is disordered. Residues 853-869 (DPRERERDQHDKNKRLL) are compositionally biased toward basic and acidic residues. The C4-type zinc-finger motif lies at 919–939 (YCSHCRSEVRGTQCAICKGFT). Zn(2+) contacts are provided by C920, C923, C932, C935, C945, C956, H961, H964, H967, C978, C982, C984, and C986. Residues 940-989 (FQCAICHVAVRGSSNFCLTCGHGGHTSHMMEWFRTQEVCPTGCGCHCLLE) form an RING-type; atypical zinc finger.

This sequence belongs to the WD repeat WDR59 family. In terms of assembly, component of the GATOR2 subcomplex, composed of MIOS, SEC13, SEH1L, WDR24 and WDR59. The GATOR2 complex interacts with CASTOR1 and CASTOR2; the interaction is negatively regulated by arginine. The GATOR2 complex interacts with SESN1, SESN2 and SESN3; the interaction is negatively regulated by amino acids. Interacts with DDB1-CUL4A/B E3 ligase complexes.

It localises to the lysosome membrane. Its activity is regulated as follows. The GATOR2 complex is negatively regulated by the upstream amino acid sensors CASTOR1 and SESN2, which sequester the GATOR2 complex in absence of amino acids. In the presence of abundant amino acids, GATOR2 is released from CASTOR1 and SESN2 and activated. In terms of biological role, as a component of the GATOR2 complex, functions as an activator of the amino acid-sensing branch of the mTORC1 signaling pathway. The GATOR2 complex indirectly activates mTORC1 through the inhibition of the GATOR1 subcomplex. GATOR2 probably acts as an E3 ubiquitin-protein ligase toward GATOR1. In the presence of abundant amino acids, the GATOR2 complex mediates ubiquitination of the NPRL2 core component of the GATOR1 complex, leading to GATOR1 inactivation. In the absence of amino acids, GATOR2 is inhibited, activating the GATOR1 complex. This Mus musculus (Mouse) protein is GATOR2 complex protein WDR59.